A 379-amino-acid polypeptide reads, in one-letter code: MKSVGLITEYNPFHNGHQYHINQSKKLTNADVTIAIMSGNFVMRGEPAIYNKFTRAKMALSTADLVIELPATASLSSGDHFAELAVKVADYMSVDTIAFGSENNNIKTLKQLAHSINEIEQSESFSQKVKEGKSYPRIISELLEHHEALASPNNILGISYLKAIAKHAKNINAISIKRENAQHHDSLIQHHKFASGTSIRTSIISQDDHWHHVVPKDIQHLYVTPHITLNQIFPYLKYQIIAMTTESLKNIYTVTEGFENRLKSYINEATDFHHFVKSLKTKRYTYTHIQRLLMNVLLNIKPTDVTRNIHAVKVLAMNDRGRQYLKHLKTVFPERQYITNINKSNAHYFTNEIKATHIYNAISGQQQTDFNTPVIQQYR.

Residues 7–20, G100, N153, and R178 each bind ATP; that span reads ITEY…HQYH.

It belongs to the TmcAL family.

It localises to the cytoplasm. It carries out the reaction cytidine(34) in elongator tRNA(Met) + acetate + ATP = N(4)-acetylcytidine(34) in elongator tRNA(Met) + AMP + diphosphate. Functionally, catalyzes the formation of N(4)-acetylcytidine (ac(4)C) at the wobble position of elongator tRNA(Met), using acetate and ATP as substrates. First activates an acetate ion to form acetyladenylate (Ac-AMP) and then transfers the acetyl group to tRNA to form ac(4)C34. The protein is tRNA(Met) cytidine acetate ligase of Staphylococcus aureus (strain MRSA252).